The primary structure comprises 263 residues: NH(3)-dependent NAD(+) synthetase (263 aa).

29-36 (GISGGIDS) is an ATP binding site. Aspartate 35 lines the Mg(2+) pocket. Arginine 114 is a binding site for deamido-NAD(+). Threonine 134 provides a ligand contact to ATP. Mg(2+) is bound at residue glutamate 139. Deamido-NAD(+)-binding residues include lysine 147 and aspartate 154. 2 residues coordinate ATP: lysine 163 and serine 185. 244 to 245 (HK) is a deamido-NAD(+) binding site.

The protein belongs to the NAD synthetase family. Homodimer.

The catalysed reaction is deamido-NAD(+) + NH4(+) + ATP = AMP + diphosphate + NAD(+) + H(+). It functions in the pathway cofactor biosynthesis; NAD(+) biosynthesis; NAD(+) from deamido-NAD(+) (ammonia route): step 1/1. In terms of biological role, catalyzes the ATP-dependent amidation of deamido-NAD to form NAD. Uses ammonia as a nitrogen source. The polypeptide is NH(3)-dependent NAD(+) synthetase (Methanococcoides burtonii (strain DSM 6242 / NBRC 107633 / OCM 468 / ACE-M)).